The following is a 1591-amino-acid chain: Rho guanine nucleotide exchange factor TIAM1 (1591 aa).

The tract at residues 1–70 (MGNAESQNVD…TPSIPQSLAE (70 aa)) is disordered. Gly-2 carries N-myristoyl glycine lipidation. Over residues 8–19 (NVDHEFYGEKHA) the composition is skewed to basic and acidic residues. The span at 20–49 (SLGRKHTSRSLRLSHKTRRTRHASSGKAIH) shows a compositional bias: basic residues. Residues 53–67 (EVSTRSSSTPSIPQS) are compositionally biased toward low complexity. Residues Ser-231, Ser-356, and Ser-358 each carry the phosphoserine modification. Disordered stretches follow at residues 305–380 (QISL…DRAR) and 393–422 (MSTT…SPGQ). Over residues 340–359 (TTDTDLLSRRSNATNSSYSP) the composition is skewed to polar residues. Low complexity predominate over residues 367 to 376 (GSDSGSSSTG). The span at 412–422 (QSSGTLSSPGQ) shows a compositional bias: polar residues. The PH 1 domain maps to 434 to 549 (VRKAGALAVK…TAIHSACAAA (116 aa)). Position 695 is a phosphoserine (Ser-695). The RBD domain maps to 765–832 (TPSWFCLPNN…QPEEDIYELL (68 aa)). Tyr-829 carries the post-translational modification Phosphotyrosine; by NTRK2. The PDZ domain maps to 845 to 908 (NIHIEKSDAA…NNRAAGTLNS (64 aa)). The interval 933–1034 (GVELLENPPH…TSPQLATTRQ (102 aa)) is disordered. Residues 958–975 (LTSNPGHSLSSEQGSSAE) are compositionally biased toward polar residues. Acidic residues predominate over residues 977–990 (APEEGEGPDLESSD). Residues 1014–1028 (PSDSSPSPQDATSPQ) show a composition bias toward low complexity. The DH domain maps to 1040–1234 (KLRKVICELL…NKVASHINEM (195 aa)). Residues 1261–1397 (DLSMGDLLLH…KSVHSILRDK (137 aa)) form the PH 2 domain. Tyr-1323 carries the post-translational modification Phosphotyrosine. Residues Lys-1404 and Lys-1420 each participate in a glycyl lysine isopeptide (Lys-Gly) (interchain with G-Cter in ubiquitin) cross-link. Positions 1456–1481 (TIDSDAISASSPEKEPQQPAGGGDTD) are disordered. Ser-1519 is subject to Phosphoserine.

This sequence belongs to the TIAM family. In terms of assembly, component of the Par polarity complex, composed of at least phosphorylated PRKCZ, PARD3 and TIAM1. Interacts with BAIAP2. Interacts (via PDZ domain) with CNTNAP4, SDC1 and SDC3 (via C-terminus). Interacts with CD44, PARD3 and MAPK8IP2. Interacts with EPHA8; regulates clathrin-mediated endocytosis of EPHA8. Interacts with NTRK2; mediates the activation of RAC1 by BDNF. Ubiquitinated. Undergoes 'Lys-48' ubiquitination at Lys-1404 and Lys-1420 by a CUL3(KBTBD6/7) E3 ubiquitin ligase complex composed of CUL3, RBX1, KBTBD6 and KBTBD7. 'Lys-48' ubiquitination at Lys-1404 and Lys-1420 triggers proteasomal degradation. Ubiquitination at Lys-1404 and Lys-1420 by CUL3(KBTBD6/7) also requires the membrane-associated protein GABARAP and may therefore be spatially restricted within the cell. In terms of tissue distribution, highly expressed in brain and testis and at low or moderate levels in almost all other normal tissues. Found in virtually all analyzed tumor cell lines including B- and T-lymphomas, neuroblastomas, melanomas and carcinomas.

The protein resides in the cell junction. The protein localises to the cell membrane. Its function is as follows. Guanyl-nucleotide exchange factor that activates RHO-like proteins and connects extracellular signals to cytoskeletal activities. Activates RAC1, CDC42, and to a lesser extent RHOA and their downstream signaling to regulate processes like cell adhesion and cell migration. This chain is Rho guanine nucleotide exchange factor TIAM1, found in Mus musculus (Mouse).